The chain runs to 140 residues: Glycine cleavage system H protein (140 aa).

The 83-residue stretch at 22-104 folds into the Lipoyl-binding domain; that stretch reads EVVIGITRFA…YGKGWMLRLK (83 aa). Position 63 is an N6-lipoyllysine (K63).

The protein belongs to the GcvH family. In terms of assembly, the glycine cleavage system is composed of four proteins: P, T, L and H. (R)-lipoate serves as cofactor.

The glycine cleavage system catalyzes the degradation of glycine. The H protein shuttles the methylamine group of glycine from the P protein to the T protein. This is Glycine cleavage system H protein from Magnetococcus marinus (strain ATCC BAA-1437 / JCM 17883 / MC-1).